A 348-amino-acid polypeptide reads, in one-letter code: Doublesex- and mab-3-related transcription factor dmd-10 (348 aa).

DNA-binding regions (DM) lie at residues C43 to F91 and C119 to R166. A disordered region spans residues S316–V348.

It belongs to the DMRT family. As to expression, dimorphically expressed in the dimorphically connected interneuron AVG; expression is observed in the AVG in males, but not in hermaphrodites.

Its subcellular location is the nucleus. Its function is as follows. Transcription factor. Plays a role in neuronal signaling in polymodal sensory neuron ASH, downstream of sensory receptor activation. Required for maintenance of AVG synapses. The chain is Doublesex- and mab-3-related transcription factor dmd-10 from Caenorhabditis elegans.